A 170-amino-acid chain; its full sequence is Large ribosomal subunit protein uL10 (170 aa).

This sequence belongs to the universal ribosomal protein uL10 family. As to quaternary structure, part of the ribosomal stalk of the 50S ribosomal subunit. The N-terminus interacts with L11 and the large rRNA to form the base of the stalk. The C-terminus forms an elongated spine to which L12 dimers bind in a sequential fashion forming a multimeric L10(L12)X complex.

Functionally, forms part of the ribosomal stalk, playing a central role in the interaction of the ribosome with GTP-bound translation factors. This is Large ribosomal subunit protein uL10 from Nitratiruptor sp. (strain SB155-2).